Here is a 306-residue protein sequence, read N- to C-terminus: Large ribosomal subunit protein bL19m (306 aa).

Basic and acidic residues predominate over residues 34–43; that stretch reads ENQEEQKKEA. Residues 34 to 53 form a disordered region; that stretch reads ENQEEQKKEAPPTTPTSPVN.

This sequence belongs to the bacterial ribosomal protein bL19 family. As to quaternary structure, component of the mitochondrial ribosome large subunit (39S) which comprises a 16S rRNA and about 50 distinct proteins.

It localises to the mitochondrion. This Drosophila melanogaster (Fruit fly) protein is Large ribosomal subunit protein bL19m (mRpL19).